A 107-amino-acid chain; its full sequence is Frataxin (107 aa).

It belongs to the frataxin family. As to quaternary structure, monomer.

Its subcellular location is the cytoplasm. In terms of biological role, promotes the assembly and repair of iron-sulfur clusters by delivering Fe(2+) to proteins involved in these pathways. This Trachipleistophora hominis (Microsporidian parasite) protein is Frataxin (YFH1).